A 271-amino-acid polypeptide reads, in one-letter code: Glutamate racemase (271 aa).

Residues D10 to S11 and Y42 to G43 each bind substrate. The active-site Proton donor/acceptor is the C73. N74 to S75 is a binding site for substrate. C183 acts as the Proton donor/acceptor in catalysis. T184–H185 serves as a coordination point for substrate.

This sequence belongs to the aspartate/glutamate racemases family.

It carries out the reaction L-glutamate = D-glutamate. It functions in the pathway cell wall biogenesis; peptidoglycan biosynthesis. Provides the (R)-glutamate required for cell wall biosynthesis. This chain is Glutamate racemase, found in Saccharopolyspora erythraea (strain ATCC 11635 / DSM 40517 / JCM 4748 / NBRC 13426 / NCIMB 8594 / NRRL 2338).